We begin with the raw amino-acid sequence, 196 residues long: GTP cyclohydrolase-2 (196 aa).

GTP is bound at residue 49–53 (RIHSE). 3 residues coordinate Zn(2+): Cys-54, Cys-65, and Cys-67. Residues Gln-70, 92 to 94 (EGR), and Thr-114 each bind GTP. Catalysis depends on Asp-126, which acts as the Proton acceptor. Residue Arg-128 is the Nucleophile of the active site. GTP is bound by residues Thr-149 and Lys-154.

The protein belongs to the GTP cyclohydrolase II family. As to quaternary structure, homodimer. Requires Zn(2+) as cofactor.

The enzyme catalyses GTP + 4 H2O = 2,5-diamino-6-hydroxy-4-(5-phosphoribosylamino)-pyrimidine + formate + 2 phosphate + 3 H(+). The protein operates within cofactor biosynthesis; riboflavin biosynthesis; 5-amino-6-(D-ribitylamino)uracil from GTP: step 1/4. Its function is as follows. Catalyzes the conversion of GTP to 2,5-diamino-6-ribosylamino-4(3H)-pyrimidinone 5'-phosphate (DARP), formate and pyrophosphate. The sequence is that of GTP cyclohydrolase-2 from Hamiltonella defensa subsp. Acyrthosiphon pisum (strain 5AT).